The chain runs to 136 residues: Large ribosomal subunit protein uL16 (136 aa).

The protein belongs to the universal ribosomal protein uL16 family. As to quaternary structure, part of the 50S ribosomal subunit.

Binds 23S rRNA and is also seen to make contacts with the A and possibly P site tRNAs. This chain is Large ribosomal subunit protein uL16, found in Buchnera aphidicola subsp. Cinara cedri (strain Cc).